Here is a 139-residue protein sequence, read N- to C-terminus: Small ribosomal subunit protein uS12 (139 aa).

The interval 1 to 21 (MSTVSQLIKKRRSSKTSKTKA) is disordered. Over residues 8 to 18 (IKKRRSSKTSK) the composition is skewed to basic residues. Asp102 bears the 3-methylthioaspartic acid mark.

The protein belongs to the universal ribosomal protein uS12 family. As to quaternary structure, part of the 30S ribosomal subunit. Contacts proteins S8 and S17. May interact with IF1 in the 30S initiation complex.

With S4 and S5 plays an important role in translational accuracy. Its function is as follows. Interacts with and stabilizes bases of the 16S rRNA that are involved in tRNA selection in the A site and with the mRNA backbone. Located at the interface of the 30S and 50S subunits, it traverses the body of the 30S subunit contacting proteins on the other side and probably holding the rRNA structure together. The combined cluster of proteins S8, S12 and S17 appears to hold together the shoulder and platform of the 30S subunit. In Aster yellows witches'-broom phytoplasma (strain AYWB), this protein is Small ribosomal subunit protein uS12.